The primary structure comprises 142 residues: Small heat shock protein IbpB (142 aa).

The region spanning 25-136 (GQEPQGFPPY…QPQRIAIGTT (112 aa)) is the sHSP domain.

The protein belongs to the small heat shock protein (HSP20) family. As to quaternary structure, homodimer. Forms homomultimers of about 100-150 subunits at optimal growth temperatures. Conformation changes to oligomers at high temperatures or high ionic concentrations. The decrease in size of the multimers is accompanied by an increase in chaperone activity.

It localises to the cytoplasm. In terms of biological role, associates with aggregated proteins, together with IbpA, to stabilize and protect them from irreversible denaturation and extensive proteolysis during heat shock and oxidative stress. Aggregated proteins bound to the IbpAB complex are more efficiently refolded and reactivated by the ATP-dependent chaperone systems ClpB and DnaK/DnaJ/GrpE. Its activity is ATP-independent. This Serratia proteamaculans (strain 568) protein is Small heat shock protein IbpB.